A 179-amino-acid polypeptide reads, in one-letter code: Pyridoxal 5'-phosphate synthase subunit PdxT (179 aa).

48–50 provides a ligand contact to L-glutamine; the sequence is GES. Cysteine 79 serves as the catalytic Nucleophile. L-glutamine-binding positions include arginine 101 and 127-128; that span reads IR. Residues histidine 163 and glutamate 165 each act as charge relay system in the active site.

Belongs to the glutaminase PdxT/SNO family. As to quaternary structure, in the presence of PdxS, forms a dodecamer of heterodimers. Only shows activity in the heterodimer.

It catalyses the reaction aldehydo-D-ribose 5-phosphate + D-glyceraldehyde 3-phosphate + L-glutamine = pyridoxal 5'-phosphate + L-glutamate + phosphate + 3 H2O + H(+). The enzyme catalyses L-glutamine + H2O = L-glutamate + NH4(+). Its pathway is cofactor biosynthesis; pyridoxal 5'-phosphate biosynthesis. Catalyzes the hydrolysis of glutamine to glutamate and ammonia as part of the biosynthesis of pyridoxal 5'-phosphate. The resulting ammonia molecule is channeled to the active site of PdxS. The chain is Pyridoxal 5'-phosphate synthase subunit PdxT from Francisella tularensis subsp. holarctica (strain FTNF002-00 / FTA).